A 585-amino-acid chain; its full sequence is MRGLKDELLKAIWHAFTALDLDRSGKVSKSQLKVLSHNLCTVLKVPHDPVALEEHFRDDDEGPVSNQGYMPYLNKFILEKVQDNFDKIEFNRMCWTLCVKKNLTKSPLLITEDDAFKVWVIFNFLSEDKYPLIIVPEEIEYLLKKLTEAMGGGWQQEQFEHYKINFDDNKDGLSAWELIELIGNGQFSKGMDRQTVSMAINEVFNELILDVLKQGYMMKKGHKRKNWTERWFVLKPNIISYYVSEDLKDKKGDILLDENCCVESLPDKDGKKCLFLIKCFDKTFEISASDKKKKQEWIQAIYSTIHLLKLGSPPPHKEARQRRKELRRKLLAEQEELERQMKELQAANENKQQELESVRKKLEEAASRAADEEKKRLQTQVELQTRFSTELEREKLIRQQMEEQVAQKSSELEQYLQRVRELEDMYLKLQEALEDERQARQDEETVRKLQARLLEEESSKRAELEKWHLEQQQAIQTTEAEKQELEQQRVMKEQALQEAMAQLEQLELERKQALEQYEGVKKKLEMATHMTKSWKDKVAHHEGLIRLIEPGSKNPHLITNWGPAAFTQAELEEREKSWKEKKTTE.

A PH domain is found at 210–306 (DVLKQGYMMK…WIQAIYSTIH (97 aa)). Positions 316–529 (HKEARQRRKE…VKKKLEMATH (214 aa)) form a coiled coil. Residues 347-373 (ANENKQQELESVRKKLEEAASRAADEE) form a disordered region. A compositionally biased stretch (basic and acidic residues) spans 351 to 373 (KQQELESVRKKLEEAASRAADEE).

The SWAP complex consists of NPM1, NCL, PARP1 and SWAP70. Tyrosine-phosphorylated. In terms of tissue distribution, spleen. Expressed only in B-cells that have been induced to switch to various Ig isotypes.

The protein localises to the cytoplasm. Its subcellular location is the cell membrane. It is found in the nucleus. It localises to the cell projection. The protein resides in the lamellipodium. The protein localises to the cytoskeleton. In terms of biological role, phosphatidylinositol 3,4,5-trisphosphate-dependent guanine nucleotide exchange factor (GEF) which, independently of RAS, transduces signals from tyrosine kinase receptors to RAC. It also mediates signaling of membrane ruffling. Regulates the actin cytoskeleton as an effector or adapter protein in response to agonist stimulated phosphatidylinositol (3,4)-bisphosphate production and cell protrusion. The protein is Switch-associated protein 70 (Swap70) of Mus musculus (Mouse).